A 225-amino-acid chain; its full sequence is DNA-binding response regulator MtrA (225 aa).

One can recognise a Response regulatory domain in the interval 4-117 (RILVVDDDAS…ELVARVRARL (114 aa)). Asp-53 is modified (4-aspartylphosphate). A DNA-binding region (ompR/PhoB-type) is located at residues 125 to 224 (AEMLSIADVE…VRGVGYKAGP (100 aa)).

In terms of processing, phosphorylated by MtrB.

Its function is as follows. Member of the two-component regulatory system MtrA/MtrB. This Mycolicibacterium paratuberculosis (strain ATCC BAA-968 / K-10) (Mycobacterium paratuberculosis) protein is DNA-binding response regulator MtrA (mtrA).